Reading from the N-terminus, the 327-residue chain is Small ribosomal subunit protein uS4m (327 aa).

The region spanning 96-154 is the S4 RNA-binding domain; sequence SRLDMSIHRALFASSALQARQLVLHGKVHVNGKPERRAYRQLLPGDLVTVDQKSVMNCV. Positions 156 to 173 are enriched in polar residues; sequence ASSNNTPSIQDGKQTEQV. A disordered region spans residues 156–199; it reads ASSNNTPSIQDGKQTEQVSSKDGENEKKKDNDDDLFEQTSNGKL. The segment covering 174 to 186 has biased composition (basic and acidic residues); sequence SSKDGENEKKKDN.

This sequence belongs to the universal ribosomal protein uS4 family. In terms of assembly, component of the mitochondrial small ribosomal subunit (mt-SSU). Mature yeast 74S mitochondrial ribosomes consist of a small (37S) and a large (54S) subunit. The 37S small subunit contains a 15S ribosomal RNA (15S mt-rRNA) and at least 32 different proteins. The 54S large subunit contains a 21S rRNA (21S mt-rRNA) and at least 45 different proteins. uS3m, uS4m and uS5m form the narrow entry site of the mRNA channel.

The protein resides in the mitochondrion. Its function is as follows. Component of the mitochondrial ribosome (mitoribosome), a dedicated translation machinery responsible for the synthesis of mitochondrial genome-encoded proteins, including at least some of the essential transmembrane subunits of the mitochondrial respiratory chain. The mitoribosomes are attached to the mitochondrial inner membrane and translation products are cotranslationally integrated into the membrane. In Schizosaccharomyces pombe (strain 972 / ATCC 24843) (Fission yeast), this protein is Small ribosomal subunit protein uS4m (nam9).